Reading from the N-terminus, the 119-residue chain is Large ribosomal subunit protein uL22c (119 aa).

The protein belongs to the universal ribosomal protein uL22 family. In terms of assembly, part of the 50S ribosomal subunit.

The protein resides in the plastid. It is found in the chloroplast. Its function is as follows. This protein binds specifically to 23S rRNA. Functionally, the globular domain of the protein is located near the polypeptide exit tunnel on the outside of the subunit, while an extended beta-hairpin is found that lines the wall of the exit tunnel in the center of the 70S ribosome. The sequence is that of Large ribosomal subunit protein uL22c (rpl22) from Mesostigma viride (Green alga).